The sequence spans 353 residues: Sphingosine 1-phosphate receptor 2 (353 aa).

Residues 1–34 (MGSLYSEYLNPNKVQEHYNYTKETLETQETTSRQ) are Extracellular-facing. An N-linked (GlcNAc...) asparagine glycan is attached at asparagine 19. The chain crosses the membrane as a helical span at residues 35 to 59 (VASAFIVILCCAIVVENLLVLIAVA). The Cytoplasmic portion of the chain corresponds to 60-66 (RNSKFHS). The chain crosses the membrane as a helical span at residues 67–95 (AMYLFLGNLAASDLLAGVAFVANTLLSGS). The Extracellular segment spans residues 96 to 109 (VTLRLTPVQWFARE). A helical membrane pass occupies residues 110–128 (GSAFITLSASVFSLLAIAI). The Cytoplasmic segment spans residues 129–147 (ERHVAIAKVKLYGSDKSCR). The chain crosses the membrane as a helical span at residues 148–173 (MLLLIGASWLISLVLGGLPILGWNCL). Over 174–189 (GHLEACSTVLPLYAKH) the chain is Extracellular. Residues 190–210 (YVLCVVTIFSIILLAIVALYV) form a helical membrane-spanning segment. The Cytoplasmic segment spans residues 211–233 (RIYCVVRSSHADMAAPQTLALLK). The helical transmembrane segment at 234-255 (TVTIVLGVFIVCWLPAFSILLL) threads the bilayer. The Extracellular segment spans residues 256-271 (DYACPVHSCPILYKAH). A helical membrane pass occupies residues 272-292 (YFFAVSTLNSLLNPVIYTWRS). Topologically, residues 293 to 353 (RDLRREVLRP…PTFLEGNTVV (61 aa)) are cytoplasmic. Residue cysteine 305 is the site of S-palmitoyl cysteine attachment.

The protein belongs to the G-protein coupled receptor 1 family.

The protein localises to the cell membrane. Receptor for the lysosphingolipid sphingosine 1-phosphate (S1P). S1P is a bioactive lysophospholipid that elicits diverse physiological effects on most types of cells and tissues. When expressed in rat HTC4 hepatoma cells, is capable of mediating S1P-induced cell proliferation and suppression of apoptosis. Receptor for the chemokine-like protein FAM19A5. Mediates the inhibitory effect of FAM19A5 on vascular smooth muscle cell proliferation and migration. In lymphoid follicles, couples the binding of S1P to the activation of GNA13 and downstream inhibition of AKT activation leading to suppression of germinal center (GC) B cell growth and migration outside the GC niche. The sequence is that of Sphingosine 1-phosphate receptor 2 (S1PR2) from Homo sapiens (Human).